A 257-amino-acid chain; its full sequence is 5-oxoprolinase subunit A (257 aa).

It belongs to the LamB/PxpA family. In terms of assembly, forms a complex composed of PxpA, PxpB and PxpC.

It carries out the reaction 5-oxo-L-proline + ATP + 2 H2O = L-glutamate + ADP + phosphate + H(+). In terms of biological role, catalyzes the cleavage of 5-oxoproline to form L-glutamate coupled to the hydrolysis of ATP to ADP and inorganic phosphate. The sequence is that of 5-oxoprolinase subunit A from Natranaerobius thermophilus (strain ATCC BAA-1301 / DSM 18059 / JW/NM-WN-LF).